We begin with the raw amino-acid sequence, 476 residues long: MGIKFLEVIKPFCAVLPEIQKPERKIQFREKVLWTAITLFIFLVCCQIPLFGIMSSDSADPFYWMRVILASNRGTLMELGISPIVTSGLIMQLLAGAKIIEVGDTPKDRALFNGAQKLFGMIITIGQAIVYVMTGMYGDPAEMGAGICLLIIIQLFVAGLIVLLLDELLQKGYGLGSGISLFIATNICETIVWKASSPTTINTGRGTEFEGAVIALFHLLATRTDKVRALREAFYRQNLPNLMNLIATVFVFAVVIYFQGFRVDLPIKSARYRGQYSSYPIKLFYTSNIPIILQSALVSNLYVISQMLSVRFSGNFLVNLLGQWADVSGGGPARSYPVGGLCYYLSPPESMGAILEDPVHVVVYIIFMLGSCAFFSKTWIEVSGSSAKDVAKQLKEQQMVMRGHRDTSMVHELNRYIPTAAAFGGLCIGALSVLADFLGAIGSGTGILLAVTIIYQYFEIFVKEQAEVGGMGALFF.

The Cytoplasmic segment spans residues 1 to 32; it reads MGIKFLEVIKPFCAVLPEIQKPERKIQFREKV. A helical transmembrane segment spans residues 33 to 53; sequence LWTAITLFIFLVCCQIPLFGI. Topologically, residues 54-75 are lumenal; that stretch reads MSSDSADPFYWMRVILASNRGT. A helical membrane pass occupies residues 76-96; that stretch reads LMELGISPIVTSGLIMQLLAG. At 97–117 the chain is on the cytoplasmic side; that stretch reads AKIIEVGDTPKDRALFNGAQK. A helical membrane pass occupies residues 118-138; sequence LFGMIITIGQAIVYVMTGMYG. At 139–144 the chain is on the lumenal side; sequence DPAEMG. A helical transmembrane segment spans residues 145-165; the sequence is AGICLLIIIQLFVAGLIVLLL. The Cytoplasmic segment spans residues 166 to 172; the sequence is DELLQKG. A helical transmembrane segment spans residues 173 to 193; the sequence is YGLGSGISLFIATNICETIVW. Residues 194–240 are Lumenal-facing; that stretch reads KASSPTTINTGRGTEFEGAVIALFHLLATRTDKVRALREAFYRQNLP. The chain crosses the membrane as a helical span at residues 241-261; sequence NLMNLIATVFVFAVVIYFQGF. At 262–288 the chain is on the cytoplasmic side; it reads RVDLPIKSARYRGQYSSYPIKLFYTSN. The helical transmembrane segment at 289 to 309 threads the bilayer; that stretch reads IPIILQSALVSNLYVISQMLS. Topologically, residues 310-353 are lumenal; it reads VRFSGNFLVNLLGQWADVSGGGPARSYPVGGLCYYLSPPESMGA. A helical membrane pass occupies residues 354–374; that stretch reads ILEDPVHVVVYIIFMLGSCAF. The Cytoplasmic segment spans residues 375-420; sequence FSKTWIEVSGSSAKDVAKQLKEQQMVMRGHRDTSMVHELNRYIPTA. A run of 2 helical transmembrane segments spans residues 421 to 441 and 442 to 462; these read AAFG…LGAI and GSGT…EIFV. The Cytoplasmic segment spans residues 463–476; sequence KEQAEVGGMGALFF.

It belongs to the SecY/SEC61-alpha family. In terms of assembly, the SEC61 channel-forming translocon complex consists of channel-forming core components SEC61A1, SEC61B and SEC61G and different auxiliary components such as SEC62 and SEC63.

The protein localises to the endoplasmic reticulum membrane. Its function is as follows. Component of SEC61 channel-forming translocon complex that mediates transport of signal peptide-containing precursor polypeptides across the endoplasmic reticulum (ER). Forms a ribosome receptor and a gated pore in the ER membrane, both functions required for cotranslational translocation of nascent polypeptides. This chain is Protein transport protein Sec61 subunit alpha isoform 2 (SEC61A2), found in Pongo abelii (Sumatran orangutan).